The primary structure comprises 348 residues: Killer cell immunoglobulin-like receptor 2DL1 (348 aa).

Residues 1–21 (MSLLVVSMACVGFFLLQGAWP) form the signal peptide. Residues 22-245 (HEGVHRKPSL…SKTGNPRHLH (224 aa)) lie on the Extracellular side of the membrane. Ig-like C2-type domains follow at residues 42-107 (EETV…VTHS) and 142-205 (GENV…FHDS). A disulfide bond links C49 and C100. N67, N84, N144, and N178 each carry an N-linked (GlcNAc...) asparagine glycan. C149 and C198 are disulfide-bonded. A disordered region spans residues 220–239 (VTGNPSNSWPSPTEPSSKTG). A helical membrane pass occupies residues 246–264 (ILIGTSVVIILFILLFFLL). The Cytoplasmic portion of the chain corresponds to 265 to 348 (HRWCSNKKNA…ESRSKVVSCP (84 aa)).

This sequence belongs to the immunoglobulin superfamily. As to quaternary structure, interacts with ARRB2. Interacts with PTPN6; the interaction is enhanced by ARRB2. Interacts with PTPN11; the interaction is enhanced by ARRB2. As to expression, expressed by NK cells.

The protein resides in the cell membrane. Receptor on natural killer (NK) cells for some HLA-C alleles such as w4 and w6. Inhibits the activity of NK cells thus preventing cell lysis. The protein is Killer cell immunoglobulin-like receptor 2DL1 of Homo sapiens (Human).